Consider the following 422-residue polypeptide: Protein arginine methyltransferase NDUFAF7, mitochondrial (422 aa).

The transit peptide at 1–28 (MRTLLRLKRLMPEVLWTKRSCSSSSINK) directs the protein to the mitochondrion.

Belongs to the NDUFAF7 family.

It localises to the mitochondrion. It carries out the reaction L-arginyl-[protein] + 2 S-adenosyl-L-methionine = N(omega),N(omega)'-dimethyl-L-arginyl-[protein] + 2 S-adenosyl-L-homocysteine + 2 H(+). In terms of biological role, arginine methyltransferase involved in the assembly or stability of mitochondrial NADH:ubiquinone oxidoreductase complex (complex I). Acts by mediating symmetric dimethylation of 'Arg-118' of ndufs2 after it assembles into the complex I, stabilizing the early intermediate complex. The chain is Protein arginine methyltransferase NDUFAF7, mitochondrial from Danio rerio (Zebrafish).